An 840-amino-acid polypeptide reads, in one-letter code: Leucine--tRNA ligase (840 aa).

The 'HIGH' region signature appears at 44 to 55; it reads PYPSANGLHVGH. The 'KMSKS' region signature appears at 617 to 621; it reads KMSKS. ATP is bound at residue Lys-620.

This sequence belongs to the class-I aminoacyl-tRNA synthetase family.

Its subcellular location is the cytoplasm. The enzyme catalyses tRNA(Leu) + L-leucine + ATP = L-leucyl-tRNA(Leu) + AMP + diphosphate. The chain is Leucine--tRNA ligase from Borreliella burgdorferi (strain ZS7) (Borrelia burgdorferi).